Here is a 361-residue protein sequence, read N- to C-terminus: MAGNSIGQFFRVTTFGESHGIALGCIVDGVPPGIPLTEADLQHDLDRRRPGTSRYTTQRREPDQVKILSGVFEGVTTGTSIGLLIENTDQRSQDYSAIKDVFRPGHADYTYEQKYGLRDYRGGGRSSARETAMRVAAGAIAKKYLQQQYGVKVRGYLSQIGDVTCELKDWDQVEQNPFFCPDVDKLEALDELMRALKKEGDSIGAKVSVVAESVPAGLGEPVFDRLDADLAHALMSINAVKGVEIGDGFAVVTKRGSENRDEITPDGFQSNHAGGILGGISSGQHIVAHLALKPTSSIMVPGKTINRQGEATEMVTRGRHDPCVGIRAVPIAEAMMAIVLMDHLLRQRAQCGDVNSQVPRW.

NADP(+)-binding residues include R48 and R54. FMN is bound by residues 125-127 (RSS), 238-239 (NA), G278, 293-297 (KPTSS), and R319.

The protein belongs to the chorismate synthase family. Homotetramer. The cofactor is FMNH2.

The catalysed reaction is 5-O-(1-carboxyvinyl)-3-phosphoshikimate = chorismate + phosphate. It participates in metabolic intermediate biosynthesis; chorismate biosynthesis; chorismate from D-erythrose 4-phosphate and phosphoenolpyruvate: step 7/7. In terms of biological role, catalyzes the anti-1,4-elimination of the C-3 phosphate and the C-6 proR hydrogen from 5-enolpyruvylshikimate-3-phosphate (EPSP) to yield chorismate, which is the branch point compound that serves as the starting substrate for the three terminal pathways of aromatic amino acid biosynthesis. This reaction introduces a second double bond into the aromatic ring system. The protein is Chorismate synthase of Pectobacterium carotovorum subsp. carotovorum (strain PC1).